The primary structure comprises 605 residues: Leucine-rich repeat-containing protein 40 (605 aa).

Residues 1-21 form a disordered region; it reads MSRFKRGGKAPDPLSGFRAPK. LRR repeat units follow at residues 83 to 104, 106 to 127, 129 to 151, 152 to 173, 175 to 196, 198 to 219, 221 to 242, 244 to 265, 266 to 287, 290 to 311, 313 to 335, 336 to 357, 429 to 450, 453 to 475, 476 to 497, 499 to 520, 522 to 543, 546 to 567, and 569 to 590; these read DLTK…ISLL, ALVV…IREL, NLQK…QHLQ, NLKS…IGHL, ILEE…VGQL, GLVK…IGKM, NLRQ…VAGM, SLEQ…PFLT, KLKE…HLQN, SLSV…ISLL, GLER…GSLP, NLKS…ILNK, PITT…IVEM, SVYD…CMLL, KLTH…MEAL, RLQS…LYTI, NLET…QLKK, KLST…LGNC, and SLRA…ILAK.

This is Leucine-rich repeat-containing protein 40 (lrrc40) from Xenopus laevis (African clawed frog).